Consider the following 267-residue polypeptide: DCN1-like protein 2 (267 aa).

The interval 1 to 48 (MTRKYTKKSSGSTASTTNSTAEIVDLTTSTSSVGKKRKSPDEKAQPIT) is disordered. Residues 8 to 21 (KSSGSTASTTNSTA) show a composition bias toward low complexity. Residues 75–262 (HYTYLYTYIF…LLDQFSEWVQ (188 aa)) form the DCUN1 domain.

The chain is DCN1-like protein 2 from Dictyostelium discoideum (Social amoeba).